The following is a 429-amino-acid chain: 3-phosphoshikimate 1-carboxyvinyltransferase (429 aa).

3-phosphoshikimate is bound by residues Lys-21, Ser-22, and Arg-26. Position 21 (Lys-21) interacts with phosphoenolpyruvate. Gly-94 and Arg-122 together coordinate phosphoenolpyruvate. Residues Ser-167, Gln-169, Asp-315, and Lys-342 each coordinate 3-phosphoshikimate. Gln-169 is a binding site for phosphoenolpyruvate. Asp-315 acts as the Proton acceptor in catalysis. Arg-346 and Arg-388 together coordinate phosphoenolpyruvate.

This sequence belongs to the EPSP synthase family. In terms of assembly, monomer.

It localises to the cytoplasm. The catalysed reaction is 3-phosphoshikimate + phosphoenolpyruvate = 5-O-(1-carboxyvinyl)-3-phosphoshikimate + phosphate. It participates in metabolic intermediate biosynthesis; chorismate biosynthesis; chorismate from D-erythrose 4-phosphate and phosphoenolpyruvate: step 6/7. Catalyzes the transfer of the enolpyruvyl moiety of phosphoenolpyruvate (PEP) to the 5-hydroxyl of shikimate-3-phosphate (S3P) to produce enolpyruvyl shikimate-3-phosphate and inorganic phosphate. This Desulforamulus reducens (strain ATCC BAA-1160 / DSM 100696 / MI-1) (Desulfotomaculum reducens) protein is 3-phosphoshikimate 1-carboxyvinyltransferase.